The primary structure comprises 133 residues: Fluoride-specific ion channel FluC (133 aa).

The next 4 membrane-spanning stretches (helical) occupy residues 3–23 (AVVW…GSGL), 41–61 (WGTL…LIWV), 76–96 (IVGL…CLVF), and 103–123 (LIVG…VFLG). The Na(+) site is built by Gly-81 and Thr-84.

It belongs to the fluoride channel Fluc/FEX (TC 1.A.43) family.

The protein resides in the cell inner membrane. It carries out the reaction fluoride(in) = fluoride(out). Na(+) is not transported, but it plays an essential structural role and its presence is essential for fluoride channel function. Functionally, fluoride-specific ion channel. Important for reducing fluoride concentration in the cell, thus reducing its toxicity. This chain is Fluoride-specific ion channel FluC, found in Xylella fastidiosa (strain M23).